Consider the following 245-residue polypeptide: tRNA (guanine-N(7)-)-methyltransferase (245 aa).

Residues glutamate 71, glutamate 96, aspartate 123, and aspartate 146 each contribute to the S-adenosyl-L-methionine site. Aspartate 146 is an active-site residue. Residue lysine 150 coordinates substrate. The tract at residues 152–157 (KHNKRR) is interaction with RNA. Substrate contacts are provided by residues aspartate 182 and 224–227 (TKFE).

The protein belongs to the class I-like SAM-binding methyltransferase superfamily. TrmB family.

It catalyses the reaction guanosine(46) in tRNA + S-adenosyl-L-methionine = N(7)-methylguanosine(46) in tRNA + S-adenosyl-L-homocysteine. It participates in tRNA modification; N(7)-methylguanine-tRNA biosynthesis. In terms of biological role, catalyzes the formation of N(7)-methylguanine at position 46 (m7G46) in tRNA. This is tRNA (guanine-N(7)-)-methyltransferase from Albidiferax ferrireducens (strain ATCC BAA-621 / DSM 15236 / T118) (Rhodoferax ferrireducens).